A 663-amino-acid polypeptide reads, in one-letter code: Inner nuclear membrane protein HEH2 (663 aa).

2 disordered regions span residues 46-188 and 267-289; these read QRLQ…ELPN and ISET…KNIR. Over residues 47–62 the composition is skewed to polar residues; the sequence is RLQSSPEASKVRTSIQ. Residues 91-123 show a composition bias toward basic and acidic residues; the sequence is KTVKDENVETNKRKREQISTDNEAKMQIQEEKS. Position 123 is a phosphoserine (Ser123). The span at 124 to 134 shows a compositional bias: basic residues; it reads PKKKRKKRSSK. Residues 124-137 carry the Nuclear localization signal motif; it reads PKKKRKKRSSKANK. The span at 164 to 183 shows a compositional bias: basic and acidic residues; it reads EELHKKDSSDDKPRVKELPK. The chain crosses the membrane as a helical span at residues 317–337; that stretch reads LFIWLWNGAIFLSIICPILFG.

Interacts with SRP1.

Its subcellular location is the nucleus inner membrane. This Saccharomyces cerevisiae (strain ATCC 204508 / S288c) (Baker's yeast) protein is Inner nuclear membrane protein HEH2 (HEH2).